Consider the following 422-residue polypeptide: MNSQLLFDDLAQRGLIAQTTDLEQLIALFRQPQTLYCGFDPTAGSLHIGHLVPLIMLKRFQDAGHQGIALIGGATGMIGDPSFKASERSLNSAETVAAWVNALATQIQQLMTPHLTQPLVMVNNADWMQSIGVIAFFRDIGKHFSVNAMIQRESVKQRLARPDQGISFTEFSYSLLQSYDFAQLNQTHQCALQIGGNDQWGNIVSGIDLTRRLNGTNVHGLTLPLITKSDGTKFGKTEGGAIWLDAAKTSPYMFYQFWLNCDDADVYRFLRYYTFLSVEQIEQLEATDKAQVGKPSAQRILAEEMTRFVHGQAGLESAQRISQALFSGQLNQLNLAELKQLEQDGLPCRQLAHVSDVVTLLLETGLASSKRQAREWLENGAIRINGERWHELTLAQTFALYDQYYIVQRGKKQFAMVKLAQV.

Position 36 (Tyr36) interacts with L-tyrosine. The 'HIGH' region signature appears at Pro41–His50. L-tyrosine contacts are provided by Tyr173 and Gln177. Residues Lys233–Thr237 carry the 'KMSKS' region motif. Lys236 lines the ATP pocket. Residues Ser355–Leu419 enclose the S4 RNA-binding domain.

This sequence belongs to the class-I aminoacyl-tRNA synthetase family. TyrS type 1 subfamily. As to quaternary structure, homodimer.

It is found in the cytoplasm. It catalyses the reaction tRNA(Tyr) + L-tyrosine + ATP = L-tyrosyl-tRNA(Tyr) + AMP + diphosphate + H(+). Catalyzes the attachment of tyrosine to tRNA(Tyr) in a two-step reaction: tyrosine is first activated by ATP to form Tyr-AMP and then transferred to the acceptor end of tRNA(Tyr). This is Tyrosine--tRNA ligase 1 from Vibrio vulnificus (strain CMCP6).